A 248-amino-acid polypeptide reads, in one-letter code: ATP synthase subunit a (248 aa).

6 helical membrane-spanning segments follow: residues 34–54 (TNAT…LVFG), 91–111 (YFPY…LGLL), 121–141 (IAVT…LGFV), 147–167 (FLGL…LAVI), 196–216 (VFAA…AITA), and 220–240 (LEVL…CVYL).

It belongs to the ATPase A chain family. As to quaternary structure, F-type ATPases have 2 components, CF(1) - the catalytic core - and CF(0) - the membrane proton channel. CF(1) has five subunits: alpha(3), beta(3), gamma(1), delta(1), epsilon(1). CF(0) has three main subunits: a(1), b(2) and c(9-12). The alpha and beta chains form an alternating ring which encloses part of the gamma chain. CF(1) is attached to CF(0) by a central stalk formed by the gamma and epsilon chains, while a peripheral stalk is formed by the delta and b chains.

The protein resides in the cell inner membrane. Key component of the proton channel; it plays a direct role in the translocation of protons across the membrane. The chain is ATP synthase subunit a from Paracoccus denitrificans (strain Pd 1222).